A 328-amino-acid polypeptide reads, in one-letter code: Thiamine thiazole synthase (328 aa).

Substrate contacts are provided by residues A87, 108–109 (EA), G116, and V181. Residue C215 is modified to 2,3-didehydroalanine (Cys). Substrate-binding positions include D217, H232, M284, and 294–296 (RMG).

It belongs to the THI4 family. As to quaternary structure, homooctamer. Fe cation is required as a cofactor. In terms of processing, during the catalytic reaction, a sulfide is transferred from Cys-215 to a reaction intermediate, generating a dehydroalanine residue.

The protein resides in the cytoplasm. It is found in the nucleus. The enzyme catalyses [ADP-thiazole synthase]-L-cysteine + glycine + NAD(+) = [ADP-thiazole synthase]-dehydroalanine + ADP-5-ethyl-4-methylthiazole-2-carboxylate + nicotinamide + 3 H2O + 2 H(+). Involved in biosynthesis of the thiamine precursor thiazole. Catalyzes the conversion of NAD and glycine to adenosine diphosphate 5-(2-hydroxyethyl)-4-methylthiazole-2-carboxylic acid (ADT), an adenylated thiazole intermediate. The reaction includes an iron-dependent sulfide transfer from a conserved cysteine residue of the protein to a thiazole intermediate. The enzyme can only undergo a single turnover, which suggests it is a suicide enzyme. May have additional roles in adaptation to various stress conditions and in DNA damage tolerance. The chain is Thiamine thiazole synthase (thi2) from Schizosaccharomyces pombe (strain 972 / ATCC 24843) (Fission yeast).